The primary structure comprises 349 residues: Aminomethyltransferase (349 aa).

It belongs to the GcvT family. The glycine cleavage system is composed of four proteins: P, T, L and H.

It catalyses the reaction N(6)-[(R)-S(8)-aminomethyldihydrolipoyl]-L-lysyl-[protein] + (6S)-5,6,7,8-tetrahydrofolate = N(6)-[(R)-dihydrolipoyl]-L-lysyl-[protein] + (6R)-5,10-methylene-5,6,7,8-tetrahydrofolate + NH4(+). The glycine cleavage system catalyzes the degradation of glycine. The chain is Aminomethyltransferase from Thermus thermophilus (strain ATCC 27634 / DSM 579 / HB8).